Reading from the N-terminus, the 113-residue chain is Ribonuclease P protein component (113 aa).

It belongs to the RnpA family. As to quaternary structure, consists of a catalytic RNA component (M1 or rnpB) and a protein subunit.

The catalysed reaction is Endonucleolytic cleavage of RNA, removing 5'-extranucleotides from tRNA precursor.. Functionally, RNaseP catalyzes the removal of the 5'-leader sequence from pre-tRNA to produce the mature 5'-terminus. It can also cleave other RNA substrates such as 4.5S RNA. The protein component plays an auxiliary but essential role in vivo by binding to the 5'-leader sequence and broadening the substrate specificity of the ribozyme. The polypeptide is Ribonuclease P protein component (Ureaplasma parvum serovar 3 (strain ATCC 27815 / 27 / NCTC 11736)).